A 259-amino-acid chain; its full sequence is 14-3-3-like protein (259 aa).

Residues 238-259 (MQDPAAGDDREGADMKVEDAEP) form a disordered region. Over residues 244–259 (GDDREGADMKVEDAEP) the composition is skewed to basic and acidic residues.

The protein belongs to the 14-3-3 family.

The sequence is that of 14-3-3-like protein from Chlamydomonas reinhardtii (Chlamydomonas smithii).